We begin with the raw amino-acid sequence, 299 residues long: ATP phosphoribosyltransferase (299 aa).

It belongs to the ATP phosphoribosyltransferase family. Long subfamily. It depends on Mg(2+) as a cofactor.

Its subcellular location is the cytoplasm. It catalyses the reaction 1-(5-phospho-beta-D-ribosyl)-ATP + diphosphate = 5-phospho-alpha-D-ribose 1-diphosphate + ATP. It functions in the pathway amino-acid biosynthesis; L-histidine biosynthesis; L-histidine from 5-phospho-alpha-D-ribose 1-diphosphate: step 1/9. With respect to regulation, feedback inhibited by histidine. Functionally, catalyzes the condensation of ATP and 5-phosphoribose 1-diphosphate to form N'-(5'-phosphoribosyl)-ATP (PR-ATP). Has a crucial role in the pathway because the rate of histidine biosynthesis seems to be controlled primarily by regulation of HisG enzymatic activity. The sequence is that of ATP phosphoribosyltransferase from Rhodopirellula baltica (strain DSM 10527 / NCIMB 13988 / SH1).